We begin with the raw amino-acid sequence, 318 residues long: TPR repeat-containing protein MJ0940 (318 aa).

8 TPR repeats span residues 17 to 50, 84 to 117, 119 to 151, 152 to 185, 186 to 219, 221 to 254, 255 to 288, and 289 to 318; these read SLTY…NPDF, PVAY…EEKF, TAFF…APNF, IPAY…KEND, TNAI…LNVT, IEVI…RPDD, ASLW…MPHH, and TKAL…ALDR.

In Methanocaldococcus jannaschii (strain ATCC 43067 / DSM 2661 / JAL-1 / JCM 10045 / NBRC 100440) (Methanococcus jannaschii), this protein is TPR repeat-containing protein MJ0940.